We begin with the raw amino-acid sequence, 76 residues long: ATP synthase subunit c (76 aa).

2 helical membrane passes run 13–33 (LNVV…GILI) and 55–75 (FLGL…AFIF).

Belongs to the ATPase C chain family. In terms of assembly, F-type ATPases have 2 components, F(1) - the catalytic core - and F(0) - the membrane proton channel. F(1) has five subunits: alpha(3), beta(3), gamma(1), delta(1), epsilon(1). F(0) has three main subunits: a(1), b(2) and c(10-14). The alpha and beta chains form an alternating ring which encloses part of the gamma chain. F(1) is attached to F(0) by a central stalk formed by the gamma and epsilon chains, while a peripheral stalk is formed by the delta and b chains.

Its subcellular location is the cell membrane. In terms of biological role, f(1)F(0) ATP synthase produces ATP from ADP in the presence of a proton or sodium gradient. F-type ATPases consist of two structural domains, F(1) containing the extramembraneous catalytic core and F(0) containing the membrane proton channel, linked together by a central stalk and a peripheral stalk. During catalysis, ATP synthesis in the catalytic domain of F(1) is coupled via a rotary mechanism of the central stalk subunits to proton translocation. Functionally, key component of the F(0) channel; it plays a direct role in translocation across the membrane. A homomeric c-ring of between 10-14 subunits forms the central stalk rotor element with the F(1) delta and epsilon subunits. This chain is ATP synthase subunit c, found in Bifidobacterium animalis subsp. lactis (strain AD011).